A 1820-amino-acid polypeptide reads, in one-letter code: Afadin (1820 aa).

Residues 39-133 form the Ras-associating 1 domain; the sequence is FHGVMRFYFQ…GRFVLKNEND (95 aa). The tract at residues 129-196 is disordered; sequence KNENDAIPAK…PSQGDDSENS (68 aa). A coiled-coil region spans residues 146 to 186; that stretch reads EKQEKEGVIQNFKRTLSKKEKKEKKKKEKEALRQASDKEER. Residues 160 to 172 show a composition bias toward basic residues; the sequence is TLSKKEKKEKKKK. Positions 173 to 189 are enriched in basic and acidic residues; that stretch reads EKEALRQASDKEERPSQ. Phosphoserine occurs at positions 216, 246, and 256. The 103-residue stretch at 246–348 folds into the Ras-associating 2 domain; sequence SGGTLRIYAD…LVFQLKRRPP (103 aa). The segment covering 356-371 has biased composition (basic and acidic residues); it reads KKHVEGKSLKGKDRAD. Residues 356 to 377 are disordered; the sequence is KKHVEGKSLKGKDRADGSGYGS. S391 and S424 each carry phosphoserine. The region spanning 426–492 is the FHA domain; that stretch reads TEVGTEKFDD…LQSGMRLQFG (67 aa). 13 positions are modified to phosphoserine: S512, S557, S562, S655, S1083, S1107, S1126, S1140, S1143, S1172, S1173, S1182, and S1199. Residues 538 to 569 form a disordered region; that stretch reads GDVHSGTALPASRSTTRLDSDRVSSASSTAER. Positions 653–908 constitute a Dilute domain; it reads DISPTERTHK…IENVVAVAEN (256 aa). In terms of domain architecture, PDZ spans 1007-1093; the sequence is IITVTLKKQN…VVTLEVAKQG (87 aa). The disordered stretch occupies residues 1107 to 1194; that stretch reads SPMMQRISDR…GKGPYTSGTA (88 aa). The segment covering 1113–1128 has biased composition (basic and acidic residues); it reads ISDRRGSGKPRPKSEG. Positions 1132 to 1143 are enriched in polar residues; that stretch reads YNNSAQNGSPES. The span at 1152–1172 shows a compositional bias: basic and acidic residues; sequence SEPKKLPGDDRLMKNRADHRS. The tract at residues 1203 to 1222 is disordered; the sequence is GNLCTEEQSPPPRPEAYPIP. T1232 is modified (phosphothreonine). Disordered regions lie at residues 1235-1278, 1308-1527, and 1567-1716; these read ASKS…SQEE, QSSS…KQQQ, and RLQE…LKTQ. S1238 carries the phosphoserine modification. The span at 1252–1262 shows a compositional bias: basic and acidic residues; the sequence is YEEKPHVHTES. S1275 carries the post-translational modification Phosphoserine. The segment covering 1309 to 1318 has biased composition (low complexity); sequence SSSVESSTSS. The segment covering 1325–1337 has biased composition (polar residues); the sequence is SSKSVTPASTLTK. The residue at position 1328 (S1328) is a Phosphoserine. At T1330 the chain carries Phosphothreonine. Residues 1364 to 1373 show a composition bias toward pro residues; that stretch reads LPPPPPPPPV. Positions 1407 to 1440 are enriched in basic and acidic residues; it reads EWKKREEHQRWYEKEKARLEEERERKRREQERKL. Residues 1410 to 1446 adopt a coiled-coil conformation; the sequence is KREEHQRWYEKEKARLEEERERKRREQERKLGQMRSQ. Positions 1443–1457 are enriched in polar residues; sequence MRSQTLNPASFSPLA. Residues 1487–1503 show a composition bias toward basic and acidic residues; it reads TIERKDLQYITISKEEL. Phosphoserine is present on residues S1499 and S1510. Basic and acidic residues predominate over residues 1513–1526; that stretch reads PWKRDAREKLEKQQ. Positions 1523 to 1561 form a coiled coil; that stretch reads EKQQQMHIVDMLSKEIHELQNKVDRTAEESDRLRKLMLE. A compositionally biased stretch (acidic residues) spans 1576–1587; that stretch reads EDDDEEEDDDVD. Positions 1593–1665 form a coiled coil; that stretch reads QRLEAERRAR…SRLEAERRRQ (73 aa). Residues 1595–1675 show a composition bias toward basic and acidic residues; that stretch reads LEAERRARMQ…HEEAARRLLE (81 aa). Residues S1694, S1719, S1770, and S1795 each carry the phosphoserine modification. The tract at residues 1734-1820 is disordered; the sequence is EEEDYGPAGP…TELENELNTK (87 aa). Positions 1759-1772 are enriched in basic and acidic residues; that stretch reads APREAREKLTRSQD. A compositionally biased stretch (basic and acidic residues) spans 1800 to 1820; sequence VSDKVKASRKLTELENELNTK. N6-acetyllysine is present on K1803.

In terms of assembly, homodimer. Interacts with F-actin, nectin and NECTIN3. Essential for the association of nectin and E-cadherin. Isoform 2/s-afadin does not interact with F-actin. Interacts with ZO-1 and occludin, but probably in an indirect manner. Interacts with RIT1, RIT2, NRXN1 and BCR. Interacts with ADAM10; the interaction locks ADAM10 at adherens junctions following ADAM10 recruitment to adherens junctions by TSPAN33. As to expression, isoform 1 is expressed only in a restricted set of epithelial structures during early embryogenesis.

Its subcellular location is the cell junction. The protein resides in the adherens junction. Functionally, belongs to an adhesion system, probably together with the E-cadherin-catenin system, which plays a role in the organization of homotypic, interneuronal and heterotypic cell-cell adherens junctions (AJs). Nectin- and actin-filament-binding protein that connects nectin to the actin cytoskeleton. May play a key role in the organization of epithelial structures of the embryonic ectoderm. Essential for the organization of adherens junctions. This Mus musculus (Mouse) protein is Afadin.